Consider the following 240-residue polypeptide: Probable transcriptional regulatory protein HPAG1_0159 (240 aa).

It belongs to the TACO1 family.

The protein resides in the cytoplasm. This is Probable transcriptional regulatory protein HPAG1_0159 from Helicobacter pylori (strain HPAG1).